The chain runs to 470 residues: Suppressor of SWI4 1 homolog (470 aa).

The Brix domain maps to 29–292; that stretch reads PHSFVFTRGR…LIKIQEGVGN (264 aa). Residues S238 and S240 each carry the phosphoserine modification. 2 disordered regions span residues 240–264 and 323–470; these read SEVEPDGEHNTTELPQAVAGRGNMQ and AQRQ…RRRN. Basic residues predominate over residues 342 to 355; the sequence is AHKKKSLAGIKRAR. S362 is subject to Phosphoserine. K441 is modified (N6-acetyllysine). A compositionally biased stretch (basic residues) spans 447-457; the sequence is QRGKAKPRPRA.

It localises to the nucleus. Its subcellular location is the nucleolus. In terms of biological role, may have a role in cell growth. This is Suppressor of SWI4 1 homolog (Ppan) from Mus musculus (Mouse).